A 313-amino-acid polypeptide reads, in one-letter code: Lactamase-like protein nscB (313 aa).

Residues His-97, His-99, Asp-101, and His-102 each coordinate Zn(2+). Asp-101 functions as the Proton donor/acceptor in the catalytic mechanism.

It belongs to the metallo-beta-lactamase superfamily. Requires Zn(2+) as cofactor.

It participates in secondary metabolite biosynthesis. In terms of biological role, lactamase-like protein; part of the gene cluster that mediates the biosynthesis of neosartoricin B, a prenylated anthracenone that probably exhibits T-cell antiproliferative activity, suggestive of a physiological role as an immunosuppressive agent. The non-reducing polyketide synthase nscA probably synthesizes and cyclizes the decaketide backbone. The hydrolase nscB then mediates the product release through hydrolysis followed by spontaneous decarboxylation. The prenyltransferase nscD catalyzes the addition of the dimethylallyl group to the aromatic C5. The FAD-dependent monooxygenase nscC is then responsible for the stereospecific hydroxylation at C2. Neosartoricin B can be converted into two additional compounds neosartoricins C and D. Neosartoricin C is a spirocyclic compound that is cyclized through the attack of C3 hydroxyl on C14, followed by dehydration. On the other hand, neosartoricin D is a further cyclized compound in which attack of C2 on C14 in neosartoricin C results in the formation of the acetal-containing dioxabicyclo-octanone ring. Both of these compounds are novel and possibly represent related metabolites of the gene cluster. The chain is Lactamase-like protein nscB from Arthroderma gypseum (strain ATCC MYA-4604 / CBS 118893) (Microsporum gypseum).